The chain runs to 336 residues: Nitrilase (336 aa).

The CN hydrolase domain occupies 5–278 (LKVACVQAAP…EGLLYATLDP (274 aa)). Glutamate 45 acts as the Proton acceptor in catalysis. The active-site Proton donor is the lysine 127. Catalysis depends on cysteine 161, which acts as the Nucleophile.

Belongs to the carbon-nitrogen hydrolase superfamily. Nitrilase family.

It carries out the reaction a nitrile + 2 H2O = a carboxylate + NH4(+). The enzyme catalyses (indol-3-yl)acetonitrile + 2 H2O = (indol-3-yl)acetate + NH4(+). It catalyses the reaction phenylpropanonitrile + 2 H2O = 3-phenylpropanoate + NH4(+). Functionally, arylacetonitrilase which is capable of hydrolyzing indole-3-acetonitrile (IAN) to the plant hormone indole-3-acetate (IAA), and allows the plant pathogenic bacterium to use IAN as a sole nitrogen source. Is also able to hydrolyze phenylpropionitrile (PPN), allowing the use of this compound as a sole nitrogen source. This enzyme may represent an additional mechanism for IAA biosynthesis or may be used to degrade and assimilate aldoximes and nitriles produced during host plant secondary metabolism. This Pseudomonas syringae pv. syringae (strain B728a) protein is Nitrilase.